The sequence spans 187 residues: ATP synthase subunit b 2 (187 aa).

Positions 1-13 are enriched in polar residues; the sequence is MAESHATGTTTHT. A disordered region spans residues 1 to 21; the sequence is MAESHATGTTTHTEVPHGKPE. Residues 31-53 traverse the membrane as a helical segment; the sequence is ASQLVSFAIAFALLYVIVSRFAL.

The protein belongs to the ATPase B chain family. F-type ATPases have 2 components, F(1) - the catalytic core - and F(0) - the membrane proton channel. F(1) has five subunits: alpha(3), beta(3), gamma(1), delta(1), epsilon(1). F(0) has three main subunits: a(1), b(2) and c(10-14). The alpha and beta chains form an alternating ring which encloses part of the gamma chain. F(1) is attached to F(0) by a central stalk formed by the gamma and epsilon chains, while a peripheral stalk is formed by the delta and b chains.

It localises to the cell inner membrane. Its function is as follows. F(1)F(0) ATP synthase produces ATP from ADP in the presence of a proton or sodium gradient. F-type ATPases consist of two structural domains, F(1) containing the extramembraneous catalytic core and F(0) containing the membrane proton channel, linked together by a central stalk and a peripheral stalk. During catalysis, ATP synthesis in the catalytic domain of F(1) is coupled via a rotary mechanism of the central stalk subunits to proton translocation. Component of the F(0) channel, it forms part of the peripheral stalk, linking F(1) to F(0). The b'-subunit is a diverged and duplicated form of b found in plants and photosynthetic bacteria. This Afipia carboxidovorans (strain ATCC 49405 / DSM 1227 / KCTC 32145 / OM5) (Oligotropha carboxidovorans) protein is ATP synthase subunit b 2 (atpF2).